The following is a 942-amino-acid chain: Protein O-mannosyl-transferase TMTC1 (942 aa).

Residues 1–20 (MLVTRGDRGGGERAPSRRPR) are Cytoplasmic-facing. The chain crosses the membrane as a helical span at residues 21–41 (CGLVPAGAAALLAGASCLCYG). Topologically, residues 42-109 (RSLRGEFVHD…RLNIFLTGMN (68 aa)) are extracellular. Residues 110 to 130 (PFYFHAVNVILHCLVTLVLMY) traverse the membrane as a helical segment. Topologically, residues 131 to 140 (TCDKTVFKNR) are cytoplasmic. Residues 141 to 157 (GLAFVTALLFAVHPVHT) traverse the membrane as a helical segment. The Extracellular portion of the chain corresponds to 158 to 159 (EA). Residues 160–180 (VAGIVGRADVLACLLFLLAFL) form a helical membrane-spanning segment. At 181 to 196 (SYQRSLDQGCAGQCFP) the chain is on the cytoplasmic side. The chain crosses the membrane as a helical span at residues 197-217 (TTASPFFLLLSLFLGTCAMLV). The Extracellular portion of the chain corresponds to 218 to 331 (KETGITVFGV…LLTLRPFLKR (114 aa)). The interval 245-285 (NGAVCQHSSGQPGSPQPSSQQAHPHRESRKQRFPHKDSWGG) is disordered. Positions 250 to 266 (QHSSGQPGSPQPSSQQA) are enriched in low complexity. The chain crosses the membrane as a helical span at residues 332-352 (AILVISYVTVILYFRLWIMGG). Residues 353 to 373 (TMPLFSEQDNPASFSPYILTR) are Cytoplasmic-facing. A helical membrane pass occupies residues 374 to 394 (FLTYSYLLAFNVWLLLAPITL). Over 395-414 (CYDWQVGSIPLVETIWDVRN) the chain is Extracellular. Residues 415 to 435 (LATILLAVVMALLSLHCVAAF) form a helical membrane-spanning segment. The Cytoplasmic portion of the chain corresponds to 436-441 (KRLEHK). Residues 442-462 (EVLAGLLFLVFPFIPASNLFF) traverse the membrane as a helical segment. Position 463 (Arg463) is a topological domain, extracellular. The chain crosses the membrane as a helical span at residues 464 to 484 (VGFVVAERVLYMPSMGYCILF). Residues 485 to 498 (VHGLSKLCAGLSRC) lie on the Cytoplasmic side of the membrane. Residues 499-519 (GATSLMASTVLLLLLFSWKTV) form a helical membrane-spanning segment. Residues 520 to 942 (KQNEIWLSRE…LQEVRERDQT (423 aa)) are Extracellular-facing. TPR repeat units follow at residues 543–576 (AKVHYNYANFLKDQGRNKEAIYHYRTALKLYPRH), 577–607 (ASALNNLGTLTKDMAEAKMYYQKALQLHPQH), 608–641 (NRALFNLGNLLKSQEKTEEAIMLLKESIKYGPDF), 642–675 (ADAYSSLASLLAEQERFKEAEDIYQAGIKNCPDS), 676–709 (SDLHNNYAVFLVDSGFPEKAVAHYQQAIQLSPSH), 710–742 (HVAVVNLGRLYRSLGENSKAEEWYRRALKVART), 743–776 (AEVLSPLGALYYNTGRHKEALEVYREAVSLQPSQ), 777–810 (RELRLALAQVLAVMGQTKEAEKITSHIVSEEPRC), 811–844 (LECYRLLSAIHSKQEHHGKALEAIEKALQLKPKD), 849–882 (SELFFTKGNQLREQNLLDKAFESYEAAVTLDPDQ), and 883–916 (AQAWMNMGGIRHIQGSYVSARAYYERALKLVPDS).

Belongs to the TMTC family. May interact with FAM168B.

The protein resides in the membrane. Its subcellular location is the endoplasmic reticulum. The enzyme catalyses a di-trans,poly-cis-dolichyl beta-D-mannosyl phosphate + L-seryl-[protein] = 3-O-(alpha-D-mannosyl)-L-seryl-[protein] + a di-trans,poly-cis-dolichyl phosphate + H(+). The catalysed reaction is a di-trans,poly-cis-dolichyl beta-D-mannosyl phosphate + L-threonyl-[protein] = 3-O-(alpha-D-mannosyl)-L-threonyl-[protein] + a di-trans,poly-cis-dolichyl phosphate + H(+). It participates in protein modification; protein glycosylation. Its function is as follows. Transfers mannosyl residues to the hydroxyl group of serine or threonine residues. The 4 members of the TMTC family are O-mannosyl-transferases dedicated primarily to the cadherin superfamily, each member seems to have a distinct role in decorating the cadherin domains with O-linked mannose glycans at specific regions. Also acts as O-mannosyl-transferase on other proteins such as PDIA3. This Mus musculus (Mouse) protein is Protein O-mannosyl-transferase TMTC1.